We begin with the raw amino-acid sequence, 207 residues long: Ribosomal RNA small subunit methyltransferase G (207 aa).

S-adenosyl-L-methionine contacts are provided by residues Gly-73, Leu-78, 124 to 125 (VE), and Arg-139.

The protein belongs to the methyltransferase superfamily. RNA methyltransferase RsmG family.

The protein resides in the cytoplasm. It carries out the reaction guanosine(527) in 16S rRNA + S-adenosyl-L-methionine = N(7)-methylguanosine(527) in 16S rRNA + S-adenosyl-L-homocysteine. Functionally, specifically methylates the N7 position of guanine in position 527 of 16S rRNA. The sequence is that of Ribosomal RNA small subunit methyltransferase G from Escherichia fergusonii (strain ATCC 35469 / DSM 13698 / CCUG 18766 / IAM 14443 / JCM 21226 / LMG 7866 / NBRC 102419 / NCTC 12128 / CDC 0568-73).